Consider the following 803-residue polypeptide: Early 94 kDa protein (803 aa).

The protein is Early 94 kDa protein of Lepidoptera (butterflies and moths).